The chain runs to 357 residues: Protein RecA (357 aa).

67 to 74 (GPESSGKT) provides a ligand contact to ATP.

The protein belongs to the RecA family.

The protein localises to the cytoplasm. In terms of biological role, can catalyze the hydrolysis of ATP in the presence of single-stranded DNA, the ATP-dependent uptake of single-stranded DNA by duplex DNA, and the ATP-dependent hybridization of homologous single-stranded DNAs. It interacts with LexA causing its activation and leading to its autocatalytic cleavage. The polypeptide is Protein RecA (Leifsonia xyli subsp. xyli (strain CTCB07)).